A 326-amino-acid chain; its full sequence is ELMO domain-containing protein 1 (326 aa).

The ELMO domain occupies Q133 to L306.

Acts as a GTPase-activating protein (GAP) toward guanine nucleotide exchange factors like ARL2, ARL3, ARF1 and ARF6, but not for GTPases outside the Arf family. This chain is ELMO domain-containing protein 1 (ELMOD1), found in Bos taurus (Bovine).